The primary structure comprises 100 residues: MHFTQREQDKLMIVVAAEVARRRKARGLKLNHPEALALISDELLEGARDGKTVAELMSYGRQILNKEDVMDGVEHMITDIEIEATFPDGTKLITVHHPIV.

It belongs to the urease gamma subunit family. In terms of assembly, heterotrimer of UreA (gamma), UreB (beta) and UreC (alpha) subunits. Three heterotrimers associate to form the active enzyme.

Its subcellular location is the cytoplasm. It catalyses the reaction urea + 2 H2O + H(+) = hydrogencarbonate + 2 NH4(+). It participates in nitrogen metabolism; urea degradation; CO(2) and NH(3) from urea (urease route): step 1/1. This chain is Urease subunit gamma, found in Staphylococcus aureus (strain N315).